We begin with the raw amino-acid sequence, 347 residues long: MAMPKLTYEEAGVNVQEGQRAVNLMKESVKSTFTKGVLGDIGGFGGLFALDPREMEKPILVAGTDGVGTKLKLAFMMNRHDTIGEDCVAMCVNDILCQGAKPLFFLDYIATGKLKAEVVAEIVQGIANGCKKAGCALIGGETAEMPGFYQKGEYDVAGFTVGMVEEKNLITGKEISQGDIMIGISSSGVHSNGFSLVRKLFFEDKQYSVDQYVDGLGETLGEALLRPTKIYVKPILEVLQQEKIKGMVHVTGGGFYENIPRILPEGIDANVHLDTWQAPPIFQFIQQEGQIEQDEMFSTFNMGIGMIVVVERSAGEKVVQLLQELGEEASIIGEMVRGSKQVVLCQK.

Belongs to the AIR synthase family.

Its subcellular location is the cytoplasm. It catalyses the reaction 2-formamido-N(1)-(5-O-phospho-beta-D-ribosyl)acetamidine + ATP = 5-amino-1-(5-phospho-beta-D-ribosyl)imidazole + ADP + phosphate + H(+). The protein operates within purine metabolism; IMP biosynthesis via de novo pathway; 5-amino-1-(5-phospho-D-ribosyl)imidazole from N(2)-formyl-N(1)-(5-phospho-D-ribosyl)glycinamide: step 2/2. This chain is Phosphoribosylformylglycinamidine cyclo-ligase, found in Alkaliphilus metalliredigens (strain QYMF).